A 351-amino-acid chain; its full sequence is uncharacterized protein (351 aa).

An HTH lacI-type domain is found at 14-69 (PRLADIAAQAQVSEATASRVLNGRPASRXSTRQRVLAALDLLGYERPTRLRRRSAG). Residues 16–35 (LADIAAQAQVSEATASRVLN) constitute a DNA-binding region (H-T-H motif).

Its function is as follows. Putative sugar-binding regulatory protein for the alpha-amylase gene. This is an uncharacterized protein from Streptomyces limosus (Streptomyces albidoflavus).